Consider the following 283-residue polypeptide: Dihydropteroate synthase (283 aa).

Residues 18–274 (PKIMGIVNLT…DVKATADALK (257 aa)) enclose the Pterin-binding domain. Mg(2+) is bound at residue asparagine 25. Residues threonine 66, aspartate 99, asparagine 119, aspartate 190, lysine 227, and 262–264 (RVH) contribute to the (7,8-dihydropterin-6-yl)methyl diphosphate site.

This sequence belongs to the DHPS family. In terms of assembly, homodimer. Requires Mg(2+) as cofactor.

It catalyses the reaction (7,8-dihydropterin-6-yl)methyl diphosphate + 4-aminobenzoate = 7,8-dihydropteroate + diphosphate. Its pathway is cofactor biosynthesis; tetrahydrofolate biosynthesis; 7,8-dihydrofolate from 2-amino-4-hydroxy-6-hydroxymethyl-7,8-dihydropteridine diphosphate and 4-aminobenzoate: step 1/2. Catalyzes the condensation of para-aminobenzoate (pABA) with 6-hydroxymethyl-7,8-dihydropterin diphosphate (DHPt-PP) to form 7,8-dihydropteroate (H2Pte), the immediate precursor of folate derivatives. This is Dihydropteroate synthase (folP) from Neisseria meningitidis serogroup C.